Consider the following 318-residue polypeptide: Methionyl-tRNA formyltransferase (318 aa).

113–116 (SLLP) provides a ligand contact to (6S)-5,6,7,8-tetrahydrofolate.

Belongs to the Fmt family.

The catalysed reaction is L-methionyl-tRNA(fMet) + (6R)-10-formyltetrahydrofolate = N-formyl-L-methionyl-tRNA(fMet) + (6S)-5,6,7,8-tetrahydrofolate + H(+). Functionally, attaches a formyl group to the free amino group of methionyl-tRNA(fMet). The formyl group appears to play a dual role in the initiator identity of N-formylmethionyl-tRNA by promoting its recognition by IF2 and preventing the misappropriation of this tRNA by the elongation apparatus. The protein is Methionyl-tRNA formyltransferase of Hahella chejuensis (strain KCTC 2396).